The following is a 412-amino-acid chain: Serine hydroxymethyltransferase (412 aa).

(6S)-5,6,7,8-tetrahydrofolate-binding positions include L117 and 121-123 (GHL). Position 226 is an N6-(pyridoxal phosphate)lysine (K226). A (6S)-5,6,7,8-tetrahydrofolate-binding site is contributed by 349–351 (SPF).

The protein belongs to the SHMT family. As to quaternary structure, homodimer. Requires pyridoxal 5'-phosphate as cofactor.

The protein resides in the cytoplasm. The enzyme catalyses (6R)-5,10-methylene-5,6,7,8-tetrahydrofolate + glycine + H2O = (6S)-5,6,7,8-tetrahydrofolate + L-serine. It participates in one-carbon metabolism; tetrahydrofolate interconversion. It functions in the pathway amino-acid biosynthesis; glycine biosynthesis; glycine from L-serine: step 1/1. Catalyzes the reversible interconversion of serine and glycine with tetrahydrofolate (THF) serving as the one-carbon carrier. This reaction serves as the major source of one-carbon groups required for the biosynthesis of purines, thymidylate, methionine, and other important biomolecules. Also exhibits THF-independent aldolase activity toward beta-hydroxyamino acids, producing glycine and aldehydes, via a retro-aldol mechanism. The chain is Serine hydroxymethyltransferase from Halothermothrix orenii (strain H 168 / OCM 544 / DSM 9562).